A 104-amino-acid polypeptide reads, in one-letter code: L-rhamnose mutarotase (104 aa).

Residue Y18 coordinates substrate. Residue H22 is the Proton donor of the active site. Substrate contacts are provided by residues Y41 and 76-77 (WW).

This sequence belongs to the rhamnose mutarotase family. As to quaternary structure, homodimer.

It localises to the cytoplasm. The catalysed reaction is alpha-L-rhamnose = beta-L-rhamnose. It participates in carbohydrate metabolism; L-rhamnose metabolism. In terms of biological role, involved in the anomeric conversion of L-rhamnose. The protein is L-rhamnose mutarotase of Klebsiella pneumoniae subsp. pneumoniae (strain ATCC 700721 / MGH 78578).